A 209-amino-acid chain; its full sequence is Ribonuclease HII (209 aa).

In terms of domain architecture, RNase H type-2 spans 20 to 209 (QLEIGIDEVG…KSFLTKLNLI (190 aa)). A divalent metal cation is bound by residues Asp26, Glu27, and Asp122.

Belongs to the RNase HII family. The cofactor is Mn(2+). It depends on Mg(2+) as a cofactor.

The protein resides in the cytoplasm. The catalysed reaction is Endonucleolytic cleavage to 5'-phosphomonoester.. Functionally, endonuclease that specifically degrades the RNA of RNA-DNA hybrids. In Prochlorococcus marinus (strain MIT 9515), this protein is Ribonuclease HII.